We begin with the raw amino-acid sequence, 218 residues long: Stromal cell-derived factor 2-like protein (218 aa).

A signal peptide spans 1–21 (MALGFFCLAIFLYLSLDPDSG). MIR domains follow at residues 34-88 (GVEI…VKPV), 96-151 (GDAV…LIIE), and 154-208 (GKTW…AAEG). Asparagine 214 carries an N-linked (GlcNAc...) asparagine glycan.

As to quaternary structure, interacts with ERDJ3B.

It localises to the endoplasmic reticulum. In terms of biological role, involved in the endoplasmic reticulum (ER) protein quality control and unfolded protein response. May be involved in the quality control of glycoproteins. Forms a complex in the ER with ERDJ3B and MED37A/BIP1 which is required for the proper accumulation and function of the surface-exposed leucine-rich repeat receptor kinases EFR involved in pathogen-associated molecular pattern (PAMP) triggered immunity. This chain is Stromal cell-derived factor 2-like protein (SDF2), found in Arabidopsis thaliana (Mouse-ear cress).